The following is a 164-amino-acid chain: Pleckstrin homology domain-containing family J member 1 (164 aa).

The region spanning 15-108 is the PH domain; the sequence is PAEMAAELGM…WMEALQRASY (94 aa).

In Mus musculus (Mouse), this protein is Pleckstrin homology domain-containing family J member 1 (Plekhj1).